A 252-amino-acid polypeptide reads, in one-letter code: Cilia- and flagella-associated protein 300 (252 aa).

The protein belongs to the CFAP300 family.

It localises to the cytoplasm. The protein resides in the cytoskeleton. The protein localises to the cilium axoneme. In terms of biological role, cilium- and flagellum-specific protein that plays a role in axonemal structure organization and motility. Plays a role in outer and inner axonemal dynein arm assembly. The protein is Cilia- and flagella-associated protein 300 of Paramecium tetraurelia.